Here is a 350-residue protein sequence, read N- to C-terminus: Transcriptional activator hacA (350 aa).

Positions 1–118 (MKSADRFSPV…RLEMEKLESE (118 aa)) are disordered. Positions 35-47 (PADTSLQTKNVVA) are enriched in polar residues. Composition is skewed to basic and acidic residues over residues 81-95 (KTED…ERVL) and 104-118 (SRER…LESE). A bZIP domain is found at 87–150 (EQRRIERVLR…NRLSQQVAQL (64 aa)). Residues 89–142 (RRIERVLRNRAAAQTSRERKRLEMEKLESEKIDMEQQNQFLLQRLAQMEAENNR) are basic motif. The segment at 143–150 (LSQQVAQL) is leucine-zipper. 3 disordered regions span residues 152–175 (AEVR…PTLT), 194–218 (PTPS…DLTQ), and 328–350 (SLQP…AGSA). Residues 160 to 175 (STPTSSSPASVSPTLT) are compositionally biased toward low complexity. Polar residues-rich tracts occupy residues 196–211 (PSVT…SSLA) and 329–340 (LQPSHGASTSRC).

This sequence belongs to the bZIP family. Homodimer.

The protein localises to the nucleus. In terms of biological role, transcriptional activator involved in the unfolded protein response (UPR) pathway. Recognizes and binds to the UPR element (UPRE) in the promoter of UPR-regulated genes. Increases the synthesis of endoplasmic reticulum-resident proteins required for protein folding as well as components of the secretory pathway. The chain is Transcriptional activator hacA (hacA) from Emericella nidulans (strain FGSC A4 / ATCC 38163 / CBS 112.46 / NRRL 194 / M139) (Aspergillus nidulans).